Consider the following 862-residue polypeptide: DNA mismatch repair protein MutS (862 aa).

608–615 contributes to the ATP binding site; that stretch reads GPNMAGKS.

The protein belongs to the DNA mismatch repair MutS family.

Its function is as follows. This protein is involved in the repair of mismatches in DNA. It is possible that it carries out the mismatch recognition step. This protein has a weak ATPase activity. This Borreliella afzelii (strain PKo) (Borrelia afzelii) protein is DNA mismatch repair protein MutS.